Here is a 92-residue protein sequence, read N- to C-terminus: Acylphosphatase (92 aa).

The cysteines at positions 5 and 49 are disulfide-linked. The Acylphosphatase-like domain occupies 5-92 (CIIAWIYGRV…SGELTDFRIR (88 aa)). Residues arginine 20 and asparagine 38 contribute to the active site.

Belongs to the acylphosphatase family.

The catalysed reaction is an acyl phosphate + H2O = a carboxylate + phosphate + H(+). This chain is Acylphosphatase, found in Shigella boydii serotype 4 (strain Sb227).